Reading from the N-terminus, the 784-residue chain is Spindle pole body component alp4 (784 aa).

The protein belongs to the TUBGCP family. Part of the gamma-tubulin complex. Interacts with mcp6. Interacts with mto1. Interacts with mto2.

The protein localises to the cytoplasm. It localises to the cytoskeleton. Its subcellular location is the microtubule organizing center. It is found in the spindle pole body. Component of the gamma tubule complex that is required for the regulation of both interphase microtubules and mitotic bipolar spindles. This Schizosaccharomyces pombe (strain 972 / ATCC 24843) (Fission yeast) protein is Spindle pole body component alp4 (alp4).